The chain runs to 543 residues: Zinc metalloproteinase (543 aa).

The first 24 residues, 1-24, serve as a signal peptide directing secretion; that stretch reads MHPNYYLSPLAVAIALGIASPVKA. The propeptide occupies 25 to 207; the sequence is ADPIPLQKSS…PFVQWDDVKT (183 aa). Residue His-377 coordinates Zn(2+). The active site involves Glu-378. His-381 and Glu-401 together coordinate Zn(2+). The active-site Proton donor is His-463.

Belongs to the peptidase M4 family. It depends on Zn(2+) as a cofactor.

Its subcellular location is the secreted. Its function is as follows. Cleaves collagen, gelatin, casein, alpha-1-antitrypsin, and bovine insulin. May play a role in the pathogenesis of legionnaires disease. The polypeptide is Zinc metalloproteinase (Legionella pneumophila).